A 235-amino-acid chain; its full sequence is uncharacterized protein (235 aa).

It to E.coli YbeR.

This is an uncharacterized protein from Escherichia coli (strain K12).